Here is a 273-residue protein sequence, read N- to C-terminus: Large ribosomal subunit protein uL2c (273 aa).

Residues 1 to 31 (MAIHLSKTSSPSTRNGAVNSQVKSNSRNRLI) show a composition bias toward polar residues. 2 disordered regions span residues 1–53 (MAIH…GHRG) and 222–273 (MNPV…RRSK).

It belongs to the universal ribosomal protein uL2 family. As to quaternary structure, part of the 50S ribosomal subunit.

The protein resides in the plastid. It is found in the chloroplast. The sequence is that of Large ribosomal subunit protein uL2c (rpl2) from Pisum sativum (Garden pea).